The sequence spans 339 residues: Tetraacyldisaccharide 4'-kinase (339 aa).

Residue 58 to 65 (NVGGVGKT) coordinates ATP.

The protein belongs to the LpxK family.

It catalyses the reaction a lipid A disaccharide + ATP = a lipid IVA + ADP + H(+). Its pathway is glycolipid biosynthesis; lipid IV(A) biosynthesis; lipid IV(A) from (3R)-3-hydroxytetradecanoyl-[acyl-carrier-protein] and UDP-N-acetyl-alpha-D-glucosamine: step 6/6. Functionally, transfers the gamma-phosphate of ATP to the 4'-position of a tetraacyldisaccharide 1-phosphate intermediate (termed DS-1-P) to form tetraacyldisaccharide 1,4'-bis-phosphate (lipid IVA). The protein is Tetraacyldisaccharide 4'-kinase of Chromobacterium violaceum (strain ATCC 12472 / DSM 30191 / JCM 1249 / CCUG 213 / NBRC 12614 / NCIMB 9131 / NCTC 9757 / MK).